A 689-amino-acid polypeptide reads, in one-letter code: MQNIDLISEEEAQKLLEELADKIAAYNHAYYIEDNPLVSDSEYDQLFNTNLKLEQKFPHLILENSPSKKVGAKIANKFAKVTHQVPMLSLSNAFDEQDVRDFVDRIKIFLRLNEFAPIFCEPKIDGLSFSAVYKHGVLTTGATRGDGYVGEDITANIKTIKNFPHKIDNVPEFLEVRGEIYIEKQDFLNLNKEQEEQGKDKFANPRNAAAGSLRQLDSSITAKRPLKYFVYSGGVTEQNLASSQDQLLTKLKECGFNINEISKLASSEEEIFAFYEYLKTNRENLPYEIDGVVYKLNDFALQNRMGFIARSPRFATAHKFPAIIGQTKLLSITVQVGRTGTLTPVAELEPIEIGGVTVSRATLHNFQEIARKDLRIKDYVFLQRAGDVIPKIMGVDFDKRPNDTETFDTPLFCLSCNSKLHYTPEDIIIRCDNGLNCPAQNYERIRHFVSKNAMDIEGLGRKQVEFLIDKGLISNLLDIFFLKEKNDSSLAKLENMDGWGKKSVENLFKNIEKSKNVSLPRFIYALGIRHIGEQNAKLLAREFGSYNNFIAQMELLRTNEPDIYQKLKNLEGIGDKILVDIIDFFDVKENIELIKKLGEILNIEDYKETREQSGLTDKIVVFTGSLPTISRAEAKATAEKLGAKVAVGVSSNTDLVVAGVDAGSKLKKAKELNIKIIDEEEWLTLIKNV.

NAD(+) contacts are provided by residues 40–44 (DSEYD), 89–90 (SL), and Glu-121. Lys-123 acts as the N6-AMP-lysine intermediate in catalysis. Residues Arg-144, Glu-179, Lys-295, and Lys-319 each coordinate NAD(+). Cys-413, Cys-416, Cys-431, and Cys-437 together coordinate Zn(2+). A BRCT domain is found at 610 to 689 (REQSGLTDKI…EEWLTLIKNV (80 aa)).

The protein belongs to the NAD-dependent DNA ligase family. LigA subfamily. Requires Mg(2+) as cofactor. The cofactor is Mn(2+).

It carries out the reaction NAD(+) + (deoxyribonucleotide)n-3'-hydroxyl + 5'-phospho-(deoxyribonucleotide)m = (deoxyribonucleotide)n+m + AMP + beta-nicotinamide D-nucleotide.. In terms of biological role, DNA ligase that catalyzes the formation of phosphodiester linkages between 5'-phosphoryl and 3'-hydroxyl groups in double-stranded DNA using NAD as a coenzyme and as the energy source for the reaction. It is essential for DNA replication and repair of damaged DNA. This chain is DNA ligase, found in Rickettsia conorii (strain ATCC VR-613 / Malish 7).